Here is a 521-residue protein sequence, read N- to C-terminus: Glucose-1-phosphate adenylyltransferase small subunit, chloroplastic/amyloplastic (521 aa).

The disordered stretch occupies residues 1–32 (MAASIGALKSSPSSNNCINERRNDSTRAVSSR). The transit peptide at 1–72 (MAASIGALKS…RSPMIVSPKA (72 aa)) directs the protein to the chloroplast. Residue Lys-268 coordinates substrate. Residues 444–454 (TDADRKLLAAK) are allosteric regulation.

This sequence belongs to the bacterial/plant glucose-1-phosphate adenylyltransferase family. As to quaternary structure, heterotetramer. In terms of tissue distribution, leaves and tubers.

It is found in the plastid. The protein localises to the chloroplast. The protein resides in the amyloplast. It carries out the reaction alpha-D-glucose 1-phosphate + ATP + H(+) = ADP-alpha-D-glucose + diphosphate. Its pathway is glycan biosynthesis; starch biosynthesis. Activated by 3'phosphoglycerate, inhibited by orthophosphate. Allosteric regulation. In terms of biological role, this protein plays a role in synthesis of starch. It catalyzes the synthesis of the activated glycosyl donor, ADP-glucose from Glc-1-P and ATP. The protein is Glucose-1-phosphate adenylyltransferase small subunit, chloroplastic/amyloplastic of Solanum tuberosum (Potato).